We begin with the raw amino-acid sequence, 169 residues long: Thaumatin-like pathogenesis-related protein 3 (169 aa).

The first 21 residues, 1-21 (MATSSAVLFLLLAVFAAGASA), serve as a signal peptide directing secretion.

The protein belongs to the thaumatin family.

Functionally, associated with resistance against stem rust fungi. This Avena sativa (Oat) protein is Thaumatin-like pathogenesis-related protein 3 (RASTL-3).